The sequence spans 356 residues: tRNA N6-adenosine threonylcarbamoyltransferase (356 aa).

Fe cation-binding residues include His-110 and His-114. Substrate is bound by residues 133–137 (LVSGG), Asp-166, Gly-179, and Asn-276. Residue Asp-304 participates in Fe cation binding.

Belongs to the KAE1 / TsaD family. Requires Fe(2+) as cofactor.

It localises to the cytoplasm. It catalyses the reaction L-threonylcarbamoyladenylate + adenosine(37) in tRNA = N(6)-L-threonylcarbamoyladenosine(37) in tRNA + AMP + H(+). In terms of biological role, required for the formation of a threonylcarbamoyl group on adenosine at position 37 (t(6)A37) in tRNAs that read codons beginning with adenine. Is involved in the transfer of the threonylcarbamoyl moiety of threonylcarbamoyl-AMP (TC-AMP) to the N6 group of A37, together with TsaE and TsaB. TsaD likely plays a direct catalytic role in this reaction. The sequence is that of tRNA N6-adenosine threonylcarbamoyltransferase from Teredinibacter turnerae (strain ATCC 39867 / T7901).